The sequence spans 48 residues: Large ribosomal subunit protein bL32 (48 aa).

Residues 24–48 (LPMPIKDKDGSYKMPHRVNPVTKEY) form a disordered region.

This sequence belongs to the bacterial ribosomal protein bL32 family.

The polypeptide is Large ribosomal subunit protein bL32 (Campylobacter lari (strain RM2100 / D67 / ATCC BAA-1060)).